The primary structure comprises 551 residues: Mesoderm induction early response protein 3 (551 aa).

Low complexity predominate over residues 1-16; that stretch reads MAEASFGSSSPVGSLS. 2 disordered regions span residues 1 to 62 and 113 to 169; these read MAEA…EKEG and LSGD…GNSP. The span at 17 to 36 shows a compositional bias: basic and acidic residues; the sequence is SEDHDFDPTAEMLVHDYDDE. Residues serine 52, serine 53, and serine 114 each carry the phosphoserine modification. Positions 121–134 are enriched in polar residues; it reads QSSADDLTPSVTSH. The segment covering 154–163 has biased composition (acidic residues); that stretch reads KESEIEDVET. Serine 156 is modified (phosphoserine). At threonine 163 the chain carries Phosphothreonine. Phosphoserine is present on residues serine 165 and serine 168. Residues 174–273 form the ELM2 domain; that stretch reads REIMIGLEYQ…EAIERYCCNG (100 aa). In terms of domain architecture, SANT spans 278-330; it reads EGMTAWTEEECRSFEHALMLHGKDFHLIQKDKVRSRTVAECVAFYYMWKKSER.

Its subcellular location is the nucleus. Its function is as follows. Transcriptional repressor. The chain is Mesoderm induction early response protein 3 (Mier3) from Mus musculus (Mouse).